The chain runs to 253 residues: Retinoic acid early-inducible protein 1-beta (253 aa).

Residues 1–28 (MAKAAVTKRHHFMIQKLLILLSYGYTNG) form the signal peptide. Cysteines 37 and 56 form a disulfide. N-linked (GlcNAc...) asparagine glycosylation is found at Asn38, Asn70, Asn83, Asn143, and Asn156. Cys90 and Cys190 are oxidised to a cystine. The segment at 198–230 (LKQSKEKPRSTSRSPSITQLTSTSPLPPPSHST) is disordered. Residues 211 to 221 (SPSITQLTSTS) are compositionally biased toward low complexity. The GPI-anchor amidated serine moiety is linked to residue Ser229. A propeptide spans 230 to 253 (TSKKGFISVGLIFISLLFAFAFAM) (removed in mature form).

This sequence belongs to the NKG2D ligand family. Glycosylated. In terms of tissue distribution, expressed predominantly in embryonic brain.

It is found in the cell membrane. Its function is as follows. Acts as a ligand for KLRK1. This Mus musculus (Mouse) protein is Retinoic acid early-inducible protein 1-beta (Raet1b).